The primary structure comprises 355 residues: Glucose-6-phosphatase 2 (355 aa).

Residues 1–24 (MDFLHRNGVLIIQHLQKDYRAYYT) are Lumenal-facing. A helical transmembrane segment spans residues 25–45 (FLNFMSNVGDPRNIFFIYFPL). The Cytoplasmic portion of the chain corresponds to 46-56 (CFQFNQTVGTK). Residues 57-77 (MIWVAVIGDWLNLIFKWILFG) form a helical membrane-spanning segment. Residues 78-115 (HRPYWWVQETQIYPNHSSPCLEQFPTTCETGPGSPSGH) are Lumenal-facing. Arginine 79 contributes to the substrate binding site. Asparagine 92 carries an N-linked (GlcNAc...) asparagine glycan. Histidine 115 functions as the Proton donor in the catalytic mechanism. The helical transmembrane segment at 116–136 (AMGASCVWYVMVTAALSHTVC) threads the bilayer. Topologically, residues 137–146 (GMDKFSITLH) are cytoplasmic. The helical transmembrane segment at 147–167 (RLTWSFLWSVFWLIQISVCIS) threads the bilayer. A topological domain (lumenal) is located at residue arginine 168. Position 168 (arginine 168) interacts with substrate. A helical transmembrane segment spans residues 169–189 (VFIATHFPHQVILGVIGGMLV). The active-site Nucleophile is histidine 174. Residues 190–211 (AEAFEHTPGIQTASLGTYLKTN) are Cytoplasmic-facing. A helical membrane pass occupies residues 212 to 232 (LFLFLFAVGFYLLLRVLNIDL). Over 233 to 261 (LWSVPIAKKWCANPDWIHIDTTPFAGLVR) the chain is Lumenal. Residues 262–282 (NLGVLFGLGFAINSEMFLLSC) form a helical membrane-spanning segment. Residues 283 to 293 (RGGNNYTLSFR) lie on the Cytoplasmic side of the membrane. A helical transmembrane segment spans residues 294 to 314 (LLCALTSLTILQLYHFLQIPT). At 315-318 (HEEH) the chain is on the lumenal side. A helical membrane pass occupies residues 319 to 339 (LFYVLSFCKSASIPLTVVAFI). The Cytoplasmic segment spans residues 340 to 355 (PYSVHMLMKQSGKKSQ). The Prevents secretion from ER motif lies at 352 to 355 (KKSQ).

Belongs to the glucose-6-phosphatase family. N-glycosylated; the non-glycosylated form is more unstable and is degraded through the proteasome. Specifically expressed in pancreas and also detected to a lower extent in testis. Expressed by most islet cells in the pancreas (at protein level).

Its subcellular location is the endoplasmic reticulum membrane. The catalysed reaction is D-glucose 6-phosphate + H2O = D-glucose + phosphate. Its pathway is carbohydrate biosynthesis; gluconeogenesis. Functionally, may hydrolyze glucose-6-phosphate to glucose in the endoplasmic reticulum. May be responsible for glucose production through glycogenolysis and gluconeogenesis. In Homo sapiens (Human), this protein is Glucose-6-phosphatase 2 (G6PC2).